Here is a 440-residue protein sequence, read N- to C-terminus: Proline--tRNA ligase (440 aa).

This sequence belongs to the class-II aminoacyl-tRNA synthetase family. ProS type 2 subfamily. In terms of assembly, homodimer.

It is found in the cytoplasm. It catalyses the reaction tRNA(Pro) + L-proline + ATP = L-prolyl-tRNA(Pro) + AMP + diphosphate. Functionally, catalyzes the attachment of proline to tRNA(Pro) in a two-step reaction: proline is first activated by ATP to form Pro-AMP and then transferred to the acceptor end of tRNA(Pro). This is Proline--tRNA ligase from Agrobacterium fabrum (strain C58 / ATCC 33970) (Agrobacterium tumefaciens (strain C58)).